Reading from the N-terminus, the 145-residue chain is D-aminoacyl-tRNA deacylase (145 aa).

A Gly-cisPro motif, important for rejection of L-amino acids motif is present at residues 137–138; sequence GP.

The protein belongs to the DTD family. As to quaternary structure, homodimer.

It is found in the cytoplasm. The enzyme catalyses glycyl-tRNA(Ala) + H2O = tRNA(Ala) + glycine + H(+). It catalyses the reaction a D-aminoacyl-tRNA + H2O = a tRNA + a D-alpha-amino acid + H(+). In terms of biological role, an aminoacyl-tRNA editing enzyme that deacylates mischarged D-aminoacyl-tRNAs. Also deacylates mischarged glycyl-tRNA(Ala), protecting cells against glycine mischarging by AlaRS. Acts via tRNA-based rather than protein-based catalysis; rejects L-amino acids rather than detecting D-amino acids in the active site. By recycling D-aminoacyl-tRNA to D-amino acids and free tRNA molecules, this enzyme counteracts the toxicity associated with the formation of D-aminoacyl-tRNA entities in vivo and helps enforce protein L-homochirality. The polypeptide is D-aminoacyl-tRNA deacylase (Shewanella frigidimarina (strain NCIMB 400)).